The primary structure comprises 243 residues: Small ribosomal subunit protein eS4 (243 aa).

Residues 43–105 enclose the S4 RNA-binding domain; sequence IPLLYIVRDY…TGEHYRVLPN (63 aa).

This sequence belongs to the eukaryotic ribosomal protein eS4 family. In terms of assembly, part of the 30S ribosomal subunit.

This is Small ribosomal subunit protein eS4 from Pyrococcus furiosus (strain ATCC 43587 / DSM 3638 / JCM 8422 / Vc1).